A 394-amino-acid chain; its full sequence is Phosphopentomutase (394 aa).

The Mn(2+) site is built by Asp-14, Asp-287, His-292, Asp-328, His-329, and His-340.

This sequence belongs to the phosphopentomutase family. The cofactor is Mn(2+).

It localises to the cytoplasm. It catalyses the reaction 2-deoxy-alpha-D-ribose 1-phosphate = 2-deoxy-D-ribose 5-phosphate. It carries out the reaction alpha-D-ribose 1-phosphate = D-ribose 5-phosphate. It participates in carbohydrate degradation; 2-deoxy-D-ribose 1-phosphate degradation; D-glyceraldehyde 3-phosphate and acetaldehyde from 2-deoxy-alpha-D-ribose 1-phosphate: step 1/2. Isomerase that catalyzes the conversion of deoxy-ribose 1-phosphate (dRib-1-P) and ribose 1-phosphate (Rib-1-P) to deoxy-ribose 5-phosphate (dRib-5-P) and ribose 5-phosphate (Rib-5-P), respectively. In Shouchella clausii (strain KSM-K16) (Alkalihalobacillus clausii), this protein is Phosphopentomutase.